The sequence spans 211 residues: N-(5'-phosphoribosyl)anthranilate isomerase (211 aa).

It belongs to the TrpF family.

It carries out the reaction N-(5-phospho-beta-D-ribosyl)anthranilate = 1-(2-carboxyphenylamino)-1-deoxy-D-ribulose 5-phosphate. It participates in amino-acid biosynthesis; L-tryptophan biosynthesis; L-tryptophan from chorismate: step 3/5. The sequence is that of N-(5'-phosphoribosyl)anthranilate isomerase from Pseudomonas paraeruginosa (strain DSM 24068 / PA7) (Pseudomonas aeruginosa (strain PA7)).